The sequence spans 498 residues: MASQGTKRSYEQMETDGERQNATEIRASVGKMIGGIGRFYIQMCTELKLNDYEGRLIQNSLTIERMVLSAFDERRNKYLEEHPSAGKDPKKTGGPIYKRVDGKWMRELVLYDKEEIRRIWRQANNGDDATAGLTHMMIWHSNLNDTTYQRTRALVRTGMDPRMCSLMQGSTLPRRSGAAGAAVKGVGTMVLELIRMIKRGINDRNFWRGENGRKTRIAYERMCNILKGKFQTAAQRAMMDQVRESRNPGNAEIEDLTFLARSALILRGSVAHKSCLPACVYGPAVASGYDFEKEGYSLVGIDPFKLLQTSQVYSLIRPNENPAHKSQLVWMACNSAAFEDLRVSSFIRGTKVIPRGKLSTRGVQIASNENMDTMVSSTLELRSRYWAIRTRSGGNTNQQRASAGQISIQPTFSVQRNLPFDKTTIMAAFTGNAEGRTSDMRAEIIKMMESARPEEVSFQGRGVFEFSDERAANPIVPSFDMSNEGSYFFGDNAEEYDN.

Positions 1–18 match the Unconventional nuclear localization signal motif; that stretch reads MASQGTKRSYEQMETDGE. The segment at 1–21 is disordered; it reads MASQGTKRSYEQMETDGERQN. Residues 8-21 are compositionally biased toward basic and acidic residues; the sequence is RSYEQMETDGERQN. A Bipartite nuclear localization signal motif is present at residues 198 to 216; that stretch reads KRGINDRNFWRGENGRKTR.

Belongs to the influenza viruses nucleoprotein family. Homomultimerizes to form the nucleocapsid. May bind host exportin-1/XPO1. Binds to viral genomic RNA. Protein-RNA contacts are mediated by a combination of electrostatic interactions between positively charged residues and the phosphate backbone and planar interactions between aromatic side chains and bases. Late in virus-infected cells, may be cleaved from a 56-kDa protein to a 53-kDa protein by a cellular caspase. This cleavage might be a marker for the onset of apoptosis in infected cells or have a specific function in virus host interaction.

It is found in the virion. The protein resides in the host nucleus. Encapsidates the negative strand viral RNA, protecting it from nucleases. The encapsidated genomic RNA is termed the ribonucleoprotein (RNP) and serves as template for transcription and replication. The RNP needs to be localized in the host nucleus to start an infectious cycle, but is too large to diffuse through the nuclear pore complex. NP comprises at least 2 nuclear localization signals that are responsible for the active RNP import into the nucleus through cellular importin alpha/beta pathway. Later in the infection, nclear export of RNPs are mediated through viral proteins NEP interacting with M1 which binds nucleoproteins. It is possible that nucleoprotein binds directly host exportin-1/XPO1 and plays an active role in RNPs nuclear export. M1 interaction with RNP seems to hide nucleoprotein's nuclear localization signals. Soon after a virion infects a new cell, M1 dissociates from the RNP under acidification of the virion driven by M2 protein. Dissociation of M1 from RNP unmasks nucleoprotein's nuclear localization signals, targeting the RNP to the nucleus. This Aves (Human) protein is Nucleoprotein.